The chain runs to 438 residues: ATP synthase subunit alpha, chloroplastic (438 aa).

170–177 (GDRQTGKT) provides a ligand contact to ATP.

Belongs to the ATPase alpha/beta chains family. F-type ATPases have 2 components, CF(1) - the catalytic core - and CF(0) - the membrane proton channel. CF(1) has five subunits: alpha(3), beta(3), gamma(1), delta(1), epsilon(1). CF(0) has four main subunits: a, b, b' and c.

The protein resides in the plastid. It is found in the chloroplast thylakoid membrane. It catalyses the reaction ATP + H2O + 4 H(+)(in) = ADP + phosphate + 5 H(+)(out). In terms of biological role, produces ATP from ADP in the presence of a proton gradient across the membrane. The alpha chain is a regulatory subunit. The sequence is that of ATP synthase subunit alpha, chloroplastic from Ochrosphaera neapolitana.